Reading from the N-terminus, the 198-residue chain is Recombination protein RecR (198 aa).

The C4-type zinc-finger motif lies at 57–72 (CEKCNTFTEAQICEVC). The region spanning 80–175 (TLLCVVETPA…AVTRLARGVP (96 aa)) is the Toprim domain.

This sequence belongs to the RecR family.

May play a role in DNA repair. It seems to be involved in an RecBC-independent recombinational process of DNA repair. It may act with RecF and RecO. This chain is Recombination protein RecR, found in Paraburkholderia xenovorans (strain LB400).